The primary structure comprises 1068 residues: Cytospin-B (1068 aa).

The tract at residues 1-221 (MRSAAKPWNP…VDGTSVSPGD (221 aa)) is disordered. Residue R2 is the site of N-myristoyl glycine attachment. Residues 29 to 40 (SSGMKSSKSSTS) are compositionally biased toward low complexity. Phosphoserine occurs at positions 38 and 55. Residue T78 is modified to Phosphothreonine. S112, S131, S134, S137, and S138 each carry phosphoserine. The span at 126–144 (SNPRKSVSSPTSSNTPTPT) shows a compositional bias: low complexity. Position 142 is a phosphothreonine (T142). A compositionally biased stretch (basic and acidic residues) spans 154–200 (PKQENEGGEKAALESQVRELLAEAKAKDSEINRLRSELKKYKEKRTL). 2 positions are modified to phosphoserine: S218 and S241. Composition is skewed to polar residues over residues 261-295 (PNSEGAASHTGDSSCPTSITQESSFGSPTGNQMSS), 309-323 (LRTSGSSSSDVTKAS), and 337-367 (ETPSRPLSSTSNPFKSSKCSTAGSSPNSVSE). Residues 261 to 367 (PNSEGAASHT…AGSSPNSVSE (107 aa)) are disordered. A phosphoserine mark is found at S361, S366, S369, and S425. Residues 579–773 (EVQEMLKVAR…QKELGDVQGH (195 aa)) adopt a coiled-coil conformation. The disordered stretch occupies residues 777–796 (VTSRAAPPPVDEEPESSEVD). S847 and S863 each carry phosphoserine. 2 disordered regions span residues 859-885 (AAAVSPMQRHSTYSSVRPASRGVTQRL) and 898-922 (GRTETLKPDPHLRKSPSLESLSRPP). Residues 866-875 (QRHSTYSSVR) are compositionally biased toward polar residues. Over residues 898-909 (GRTETLKPDPHL) the composition is skewed to basic and acidic residues. A phosphoserine mark is found at S912 and S914. The span at 912–922 (SPSLESLSRPP) shows a compositional bias: low complexity. One can recognise a Calponin-homology (CH) domain in the interval 962–1067 (GSKRNALLKW…YVAQIYKYFE (106 aa)).

The protein belongs to the cytospin-A family. Highly expressed in testis. Barely detectable in other tissues. Also highly expressed in some cancer cell lines.

It localises to the nucleus. It is found in the membrane. This chain is Cytospin-B (SPECC1), found in Homo sapiens (Human).